A 159-amino-acid polypeptide reads, in one-letter code: uncharacterized protein (159 aa).

H44, H124, and H128 together coordinate a divalent metal cation.

It belongs to the DinB family.

This is an uncharacterized protein from Bacillus subtilis (strain 168).